Reading from the N-terminus, the 298-residue chain is Acetylglutamate kinase (298 aa).

Substrate is bound by residues 69–70, arginine 91, and asparagine 191; that span reads GG.

It belongs to the acetylglutamate kinase family. ArgB subfamily.

It is found in the cytoplasm. It carries out the reaction N-acetyl-L-glutamate + ATP = N-acetyl-L-glutamyl 5-phosphate + ADP. The protein operates within amino-acid biosynthesis; L-arginine biosynthesis; N(2)-acetyl-L-ornithine from L-glutamate: step 2/4. Catalyzes the ATP-dependent phosphorylation of N-acetyl-L-glutamate. This Neisseria gonorrhoeae (strain ATCC 700825 / FA 1090) protein is Acetylglutamate kinase.